A 211-amino-acid polypeptide reads, in one-letter code: Small ribosomal subunit protein uS5 (211 aa).

The region spanning leucine 51 to valine 114 is the S5 DRBM domain.

Belongs to the universal ribosomal protein uS5 family. In terms of assembly, part of the 30S ribosomal subunit. Contacts protein S4.

In terms of biological role, with S4 and S12 plays an important role in translational accuracy. This Ignicoccus hospitalis (strain KIN4/I / DSM 18386 / JCM 14125) protein is Small ribosomal subunit protein uS5.